The following is a 1178-amino-acid chain: Ubiquitin carboxyl-terminal hydrolase cyk-3 (1178 aa).

EF-hand domains follow at residues 28-60 (EEYRRIRQAFQRFKNGCINYDEFCYHVLGGAQI), 175-210 (FPDSYAERLFAVFDENRDGQIDFRELVCTLSALCRG), and 211-246 (PLPGRISQLARIWDVDCDKLLSDEELSNMYKDLNVP). Residues Asp-188, Asn-190, Asp-192, Gln-194, Glu-199, Asp-224, Asp-226, Asp-228, and Glu-235 each coordinate Ca(2+). Positions 296-410 (ESRKMELQIV…VDSQFTRKYL (115 aa)) constitute a DUSP domain. Positions 570–1175 (VGLVNYGNFC…GAYLLFYERK (606 aa)) constitute a USP domain. Residue Cys-579 is the Nucleophile of the active site. Residues 681-725 (SNKSLHPSPEESEGTDSNKLSDSSKKKEADKEEADEEKAERSWTE) are disordered. His-1134 (proton acceptor) is an active-site residue.

The protein belongs to the peptidase C19 family. Expressed in excretory cells, coelomocytes, head neurons, hypodermal cells, germ cells, oocytes, sperm and pharynx (at protein level).

The protein localises to the nucleus. It is found in the cytoplasm. It localises to the cytoskeleton. Its subcellular location is the microtubule organizing center. The enzyme catalyses Thiol-dependent hydrolysis of ester, thioester, amide, peptide and isopeptide bonds formed by the C-terminal Gly of ubiquitin (a 76-residue protein attached to proteins as an intracellular targeting signal).. Ubiquitin-protein hydrolase which cleaves ubiquitin from ubiquitinated proteins. Plays a role in embryo osmoregulation. Probably by regulating osmosis, controls actin redistribution in the 1-cell embryos and thus actin-dependent processes such as cytokinesis and P-granules segregation. During the first embryonic mitotic division, involved in the formation of a functional microtubule organizing center provided by the male pronucleus. Acts as a positive regulator of the mTORC1 signaling. This is Ubiquitin carboxyl-terminal hydrolase cyk-3 from Caenorhabditis elegans.